Reading from the N-terminus, the 335-residue chain is UPF0284 protein TK0853 (335 aa).

Belongs to the UPF0284 family.

In Thermococcus kodakarensis (strain ATCC BAA-918 / JCM 12380 / KOD1) (Pyrococcus kodakaraensis (strain KOD1)), this protein is UPF0284 protein TK0853.